A 147-amino-acid chain; its full sequence is Plasminogen receptor (KT) (147 aa).

At 1-52 the chain is on the extracellular side; it reads MGFIFSKSMNENMKNQQEFMVTHARLQLERHLTMQNEMRERQMAMQIAWSRE. Residues 53 to 73 traverse the membrane as a helical segment; sequence FLKYFGTFFGIATISLATGAL. Topologically, residues 74–78 are cytoplasmic; sequence KRKKP. The helical transmembrane segment at 79–99 threads the bilayer; the sequence is AFLVPIVPLSFIFTYQYDLGY. At 100-147 the chain is on the extracellular side; it reads GTLLQRMKSEAEDILETEKTKLELPKGLITFESLEKARREQSKLFSDK.

As to quaternary structure, interacts with PLAT. Interacts with PLAUR. Expressed in monocytes; detected in differentiated monocytes but not in progenitor cells. Expressed in adrenal medulla and hippocampus.

The protein resides in the cell membrane. Its function is as follows. Receptor for plasminogen. Regulates urokinase plasminogen activator-dependent and stimulates tissue-type plasminogen activator-dependent cell surface plasminogen activation. Proposed to be part of a local catecholaminergic cell plasminogen activation system that regulates neuroendocrine prohormone processing. Involved in regulation of inflammatory response; regulates monocyte chemotactic migration and matrix metalloproteinase activation, such as of MMP2 and MMP9. The sequence is that of Plasminogen receptor (KT) (Plgrkt) from Mus musculus (Mouse).